An 892-amino-acid polypeptide reads, in one-letter code: NACHT, LRR and PYD domains-containing protein 6 (892 aa).

One can recognise a Pyrin domain in the interval 1-103 (MDQPEAPCSS…AAQLQERRLQ (103 aa)). The interval 158 to 181 (APEEAMGPAEEPEPGRARRSDTHT) is disordered. Over residues 170 to 181 (EPGRARRSDTHT) the composition is skewed to basic and acidic residues. The NACHT domain maps to 196–513 (LTVVLQGPAG…EFLAALSYLL (318 aa)). Residue 202 to 209 (GPAGIGKT) coordinates ATP. A disordered region spans residues 352–356 (KDKKK). The stretch at 462–487 (EKELEQLELRGSKVQTLFLSKKELPG) is one LRR 1 repeat. The segment at 590–614 (APEVTEGAKGLEDTEEPEEEEEGEE) is disordered. Positions 602-614 (DTEEPEEEEEGEE) are enriched in acidic residues. LRR repeat units lie at residues 727–747 (LCHLSSLTLSHCKLPDAVCRD), 755–778 (APALTELGLLHNRLSEAGLRMLSE), 811–834 (SPALTTLDLSGCQLPAPMVTYLCA), and 845–868 (TLSLASVELSEQSLQELQAVKRAK).

Belongs to the NLRP family. Homomultimer; forms the NLRP6 inflammasome polymeric complex, a filament composed of homopolymers in response to pathogens and other damage-associated signals. The core of NLRP6 inflammasomes consists of a signal sensor component (NLRP6), an adapter (PYCARD/ASC), which recruits effector pro-inflammatory caspases (CASP1 and CASP4). Interacts (via pyrin domain) with PYCARD/ASC (via pyrin domain); interaction takes place following NLRP6 activation and formation of liquid-liquid phase separation (LLPS), initiating nucleation which greatly enhances further addition of soluble PYCARD/ASC molecules to the speck in a prion-like polymerization process. Clustered PYCARD/ASC nucleates the formation of CASP1 (or possibly CASP4) filaments through the interaction of their respective CARD domains, acting as a platform for CASP1 polymerization. CASP1 filament formation increases local enzyme concentration, resulting in trans-autocleavage and activation. Active CASP1 then processes IL1B and IL18 precursors, leading to the release of mature cytokines in the extracellular milieu and inflammatory response. Interacts with DHX15. Post-translationally, polyubiquitinated with 'Lys-63'-linked chains, promoting the interaction with PYCARD/ASC and formation of the NLRP6 inflammasome. Deubiquitination by CYLD decreases the interaction with PYCARD/ASC. As to expression, expressed in peripheral blood leukocytes, predominantly in granulocytes and, at lower levels, in CD4(+) and CD8(+) T-cells. Expressed in colonic myofibroblasts (at protein level).

Its subcellular location is the cytoplasm. It is found in the cytosol. It localises to the inflammasome. The protein localises to the cell membrane. The protein resides in the nucleus membrane. Acts as the sensor component of the NLRP6 inflammasome, which mediates inflammasome activation in response to various pathogen-associated signals, leading to maturation and secretion of IL1B and IL18. Inflammasomes are supramolecular complexes that assemble in the cytosol in response to pathogens and other damage-associated signals and play critical roles in innate immunity and inflammation. Acts as a recognition receptor (PRR): recognizes and binds specific pathogens and other damage-associated signals, such as lipoteichoic acid (LTA), a cell-wall component of Gram-positive bacteria, or double stranded RNA (dsRNA). May also recognize and bind lipopolysaccharide (LPS), a major component of the outer membrane of Gram-negative bacteria; however, LPS is probably not a major activator of the NLRP6 inflammasome. Following LTA- or dsRNA-binding, NLRP6 undergoes liquid-liquid phase separation (LLPS), enhancing multivalent interactions, an essential step for the formation of the NLRP6 inflammasome polymeric complex. The NLRP6 inflammasome acts by promoting recruitment of effector pro-inflammatory caspases (CASP1 and/or CASP4) that catalyze maturation and secretion of IL1B and IL18 in the extracellular milieu. The NLRP6 inflammasome plays a central role in the maintenance of epithelial integrity and host defense against microbial infections in the intestine. Required to restrict infection against Gram-positive bacteria by recognizing lipoteichoic acid (LTA), leading to recruitment of CASP4 and CASP1, and subsequent maturation and secretion of IL1B and IL18. Involved in intestinal antiviral innate immunity together with DHX15: recognizes and binds viral dsRNA to restrict infection by enteric viruses through the interferon pathway and GSDMD-dependent release of IL18. Required to prevent infection by the apicomplexan parasite Cryptosporidium in enterocytes by promoting GSDMD-dependent release of IL18. The NLRP6 inflammasome may also regulate the gut microbiota composition by acting as a sensor of microbiota-associated metabolites to form a PYCARD/ASC-dependent inflammasome for downstream IL18 release and secretion of antimicrobial peptides. Essential for gut mucosal self-renewal and proliferation. Regulate mucus secretion in an inflammasome- and autophagy-dependent manner to prevent invasion by enteric bacteria,. During systemic bacterial infections, the NLRP6 inflammasome negatively regulates neutrophil recruitment and neutrophil extracellular traps (NETs) formation. May promote peripheral nerve recovery following injury via an inflammasome-independent mechanism. This chain is NACHT, LRR and PYD domains-containing protein 6, found in Homo sapiens (Human).